A 314-amino-acid chain; its full sequence is MSKMTPQEMAAKIGSGLLSFPVTPFKADYSFDETTYRSNMDWLCGYDVAGLFAAGGTGEFFSLTAAEVPEVVKVAVDETKGRVPVLAGTGYGTAIAREIAMSAEKAGADGLLLLPPYLMHAEQEGLAAHVEAVCKSVKIGVIVYNRDNAILQPDTLARLCERCPNLVGYKDGIGDIELMTRVYTKMGDRLTYIGGLPTAETFALPYLDMGVTTYSSAVFNFVPEFATNFYAAVRKRDHATIHAGLKDFILPLIAIRNRKKGYAVSIIKAGMKVIGRDSGPVRLPLTDLTEAEMAELTALVKALPVAASAQQAAE.

Belongs to the DapA family.

It carries out the reaction 5-dehydro-4-deoxy-D-glucarate + H(+) = 2,5-dioxopentanoate + CO2 + H2O. It participates in carbohydrate acid metabolism; D-glucarate degradation; 2,5-dioxopentanoate from D-glucarate: step 2/2. The chain is Probable 5-dehydro-4-deoxyglucarate dehydratase from Bradyrhizobium sp. (strain ORS 278).